The chain runs to 157 residues: Transcription elongation factor GreA (157 aa).

Positions 47 to 75 (SGEYEDAKKAQALLEGRIRELKHLLSRAE) form a coiled coil.

The protein belongs to the GreA/GreB family.

Functionally, necessary for efficient RNA polymerase transcription elongation past template-encoded arresting sites. The arresting sites in DNA have the property of trapping a certain fraction of elongating RNA polymerases that pass through, resulting in locked ternary complexes. Cleavage of the nascent transcript by cleavage factors such as GreA or GreB allows the resumption of elongation from the new 3'terminus. GreA releases sequences of 2 to 3 nucleotides. This Chloroflexus aurantiacus (strain ATCC 29366 / DSM 635 / J-10-fl) protein is Transcription elongation factor GreA.